We begin with the raw amino-acid sequence, 309 residues long: Taste receptor type 2 member 46 (309 aa).

M1 is a topological domain (extracellular). Residues 2 to 22 form a helical membrane-spanning segment; that stretch reads ITFLPITFSILIVVIFFIGNF. The Cytoplasmic portion of the chain corresponds to 23 to 46; it reads ANGFIALINSIEWVKRQKISFAGQ. The helical transmembrane segment at 47 to 67 threads the bilayer; that stretch reads ILTALAVSRVGLLWVLSLHWY. The Extracellular segment spans residues 68–86; that stretch reads ATEFNLAFHSVEVRSTAYN. Residues 87–107 traverse the membrane as a helical segment; sequence VWVVTNHFSNWLSTSLSMFYL. The Cytoplasmic segment spans residues 108–126; sequence LRIATFSNLIFLHLNRRVK. Residues 127-147 form a helical membrane-spanning segment; that stretch reads SVILVTLLGPLLFLVCQLFVM. Residues 148-178 lie on the Extracellular side of the membrane; that stretch reads NMNQIVRTKEYEGNMTWKIKLKSAMYLSNTT. Residues N161 and N176 are each glycosylated (N-linked (GlcNAc...) asparagine). Residues 179-199 traverse the membrane as a helical segment; that stretch reads VAMLANFVPLTLTLISFLLLI. The Cytoplasmic segment spans residues 200 to 229; that stretch reads CSLCKHLKKMRVHGKGSQDPSTKVHTKALQ. The helical transmembrane segment at 230–250 threads the bilayer; the sequence is IVTSFLLVCAIYFLSIILSVW. Topologically, residues 251–259 are extracellular; sequence NSGGLENKP. A helical transmembrane segment spans residues 260-280; it reads FFMFCQAIKFSYPSTHPFILI. At 281-309 the chain is on the cytoplasmic side; sequence WGNKTLKQTFLSVLRNVRYWVKGQKPSSP.

This sequence belongs to the G-protein coupled receptor T2R family.

The protein localises to the membrane. It is found in the cell projection. Its subcellular location is the cilium membrane. Its function is as follows. Receptor that may play a role in the perception of bitterness and is gustducin-linked. May play a role in sensing the chemical composition of the gastrointestinal content. The activity of this receptor may stimulate alpha gustducin, mediate PLC-beta-2 activation and lead to the gating of TRPM5. In airway epithelial cells, binding of bitter compounds increases the intracellular calcium ion concentration and stimulates ciliary beat frequency. This chain is Taste receptor type 2 member 46 (TAS2R46), found in Papio hamadryas (Hamadryas baboon).